The chain runs to 363 residues: MNITNCTTEASMAIRPKTITEKMLICMTLVVITTLTTLLNLAVIMAIGTTKKLHQPANYLICSLAVTDLLVAVLVMPLSIIYIVMDRWKLGYFLCEVWLSVDMTCCTCSILHLCVIALDRYWAITNAIEYARKRTAKRAALMILTVWTISIFISMPPLFWRSHRRLSPPPSQCTIQHDHVIYTIYSTLGAFYIPLTLILILYYRIYHAAKSLYQKRGSSRHLSNRSTDSQNSFASCKLTQTFCVSDFSTSDPTTEFEKFHASIRIPPFDNDLDHPGERQQISSTRERKAARILGLILGAFILSWLPFFIKELIVGLSIYTVSSEVADFLTWLGYVNSLINPLLYTSFNEDFKLAFKKLIRCRE.

Residues Met1–Glu21 lie on the Extracellular side of the membrane. Residues Asn2 and Asn5 are each glycosylated (N-linked (GlcNAc...) asparagine). Residues Lys22–Met45 form a helical membrane-spanning segment. The Cytoplasmic segment spans residues Ala46–Tyr59. The helical transmembrane segment at Leu60–Val84 threads the bilayer. The Extracellular segment spans residues Met85 to Tyr92. Residues Phe93–Leu118 form a helical membrane-spanning segment. The cysteines at positions 95 and 173 are disulfide-linked. The serotonin site is built by Asp102 and Cys106. Residues Asp119–Tyr121 carry the DRY motif; important for ligand-induced conformation changes motif. Residues Asp119–Arg138 lie on the Cytoplasmic side of the membrane. Residues Ala139 to Pro157 form a helical membrane-spanning segment. The Extracellular segment spans residues Leu158–His179. Residues Val180–Tyr203 form a helical membrane-spanning segment. Over Arg204–Arg291 the chain is Cytoplasmic. Residues Ile292 to Leu316 traverse the membrane as a helical segment. Residues Ser317–Ser322 are Extracellular-facing. The chain crosses the membrane as a helical span at residues Ser323–Thr345. An NPxxY motif; important for ligand-induced conformation changes and signaling motif is present at residues Asn340–Tyr344. Residues Ser346–Glu363 are Cytoplasmic-facing.

Belongs to the G-protein coupled receptor 1 family.

The protein localises to the cell membrane. G-protein coupled receptor for 5-hydroxytryptamine (serotonin). Also functions as a receptor for various alkaloids and psychoactive substances. Ligand binding causes a conformation change that triggers signaling via guanine nucleotide-binding proteins (G proteins) and modulates the activity of downstream effectors, such as adenylate cyclase. HTR1E is coupled to G(i)/G(o) G alpha proteins and mediates inhibitory neurotransmission by inhibiting adenylate cyclase activity. The chain is 5-hydroxytryptamine receptor 1E (HTR1E) from Pan troglodytes (Chimpanzee).